We begin with the raw amino-acid sequence, 133 residues long: Small ribosomal subunit protein uS11 (133 aa).

Residues 1–22 form a disordered region; the sequence is MPPKTRGAVRKPRKKDKKNIAL. The segment covering 7-17 has biased composition (basic residues); sequence GAVRKPRKKDK.

It belongs to the universal ribosomal protein uS11 family. Part of the 30S ribosomal subunit. Interacts with proteins S7 and S18. Binds to IF-3.

In terms of biological role, located on the platform of the 30S subunit, it bridges several disparate RNA helices of the 16S rRNA. Forms part of the Shine-Dalgarno cleft in the 70S ribosome. This Renibacterium salmoninarum (strain ATCC 33209 / DSM 20767 / JCM 11484 / NBRC 15589 / NCIMB 2235) protein is Small ribosomal subunit protein uS11.